The primary structure comprises 439 residues: GTPase Der (439 aa).

2 EngA-type G domains span residues 3–167 (PLVA…PKSS) and 176–351 (TRIA…AQYS). GTP-binding positions include 9–16 (GRPNVGKS), 56–60 (DTGGF), 119–122 (NKVD), 182–189 (GRPNVGKS), 229–233 (DTAGI), and 294–297 (NKWD). In terms of domain architecture, KH-like spans 352-436 (KRVSTSDLNR…PLKIIFRGRD (85 aa)).

It belongs to the TRAFAC class TrmE-Era-EngA-EngB-Septin-like GTPase superfamily. EngA (Der) GTPase family. In terms of assembly, associates with the 50S ribosomal subunit.

In terms of biological role, GTPase that plays an essential role in the late steps of ribosome biogenesis. The chain is GTPase Der from Geobacter metallireducens (strain ATCC 53774 / DSM 7210 / GS-15).